Consider the following 445-residue polypeptide: AVMGRNLALNIESRGYTVSIFNRSREKTEEVIAENPGKKLVPYYTVKEFVESLETPRRILLMVKAGAGTDAAIDSLKPYLDKGDIIIDGGNTFFQDTIRRNRELSAEGFNFIGTGVSGGEEGALKGPSIMPGGQKEAYELVAPILTKIAAVAEDGEPCVTYIGADGAGHYVKMVHNGIEYGDMQLIAEAYSLLKGGLNLSNEELAQTFTEWNNGELSSYLIDITKDIFTKKDEDGNYLVDVILDEAANKGTGKWTSQSALDLGEPLSLITESVFARYISSLKDQRVAASKVLSGPQAQPAGDKAEFIEKVRRALYLGKIVSYAQGFSQLRAASEEYNWDLNYGEIAKIFRAGCIIRAQFLQKITDAYAENPQIANLLLAPYFKQIADDYQQALRDVVAYAVQNGIPVPTFAAAVAYYDSYRAAFLPANLIQAQRDYFGAHTYKRI.

Residues 1–4 (AVMG), 22–24 (NRS), 63–65 (VKA), and Asn91 each bind NADP(+). Substrate contacts are provided by residues Asn91 and 117–119 (SGG). Lys172 serves as the catalytic Proton acceptor. 175–176 (HN) contacts substrate. The Proton donor role is filled by Glu179. The substrate site is built by Tyr180, Lys249, Arg276, Arg434, and His440.

The protein belongs to the 6-phosphogluconate dehydrogenase family. As to quaternary structure, homodimer.

The catalysed reaction is 6-phospho-D-gluconate + NADP(+) = D-ribulose 5-phosphate + CO2 + NADPH. It participates in carbohydrate degradation; pentose phosphate pathway; D-ribulose 5-phosphate from D-glucose 6-phosphate (oxidative stage): step 3/3. Its function is as follows. Catalyzes the oxidative decarboxylation of 6-phosphogluconate to ribulose 5-phosphate and CO(2), with concomitant reduction of NADP to NADPH. The protein is 6-phosphogluconate dehydrogenase, decarboxylating (gnd) of Shigella dysenteriae.